The primary structure comprises 317 residues: Exopolysaccharide production protein ExoZ (317 aa).

Helical transmembrane passes span 14 to 34 (TIGA…MWVI), 53 to 73 (IVPV…AGLF), 100 to 120 (IWPV…YAVF), 132 to 152 (LPVV…VAFD), 185 to 205 (LAVG…IGVL), 206 to 226 (GLPF…IGVL), and 268 to 288 (IGLG…LIGI).

This sequence belongs to the acyltransferase 3 family.

The protein localises to the cell membrane. Functionally, required for the acetyl modification of the third sugar (glucose) of the octasaccharide subunit of succinoglycan (EPS I). The chain is Exopolysaccharide production protein ExoZ (exoZ) from Rhizobium meliloti (strain 1021) (Ensifer meliloti).